The chain runs to 190 residues: Putative glutathione-dependent formaldehyde-activating enzyme (190 aa).

Residues Phe-19–Asp-165 form the CENP-V/GFA domain. Positions 26, 28, 47, 49, 52, 94, and 97 each coordinate Zn(2+).

The protein belongs to the Gfa family. Requires Zn(2+) as cofactor.

The catalysed reaction is S-(hydroxymethyl)glutathione = glutathione + formaldehyde. It functions in the pathway one-carbon metabolism; formaldehyde degradation; formate from formaldehyde (glutathione route): step 1/3. Its function is as follows. Catalyzes the condensation of formaldehyde and glutathione to S-hydroxymethylglutathione. The sequence is that of Putative glutathione-dependent formaldehyde-activating enzyme from Pyrenophora teres f. teres (strain 0-1) (Barley net blotch fungus).